A 204-amino-acid polypeptide reads, in one-letter code: Urease accessory protein UreG (204 aa).

13–20 (GPVGSGKT) contributes to the GTP binding site.

The protein belongs to the SIMIBI class G3E GTPase family. UreG subfamily. In terms of assembly, homodimer. UreD, UreF and UreG form a complex that acts as a GTP-hydrolysis-dependent molecular chaperone, activating the urease apoprotein by helping to assemble the nickel containing metallocenter of UreC. The UreE protein probably delivers the nickel.

The protein localises to the cytoplasm. Facilitates the functional incorporation of the urease nickel metallocenter. This process requires GTP hydrolysis, probably effectuated by UreG. The polypeptide is Urease accessory protein UreG (Acinetobacter baylyi (strain ATCC 33305 / BD413 / ADP1)).